The primary structure comprises 111 residues: UPF0060 membrane protein Krad_3114 (111 aa).

Transmembrane regions (helical) follow at residues Ile7–Gly27, Gly33–Leu53, Val62–Asp82, and Arg88–Pro108.

It belongs to the UPF0060 family.

The protein resides in the cell membrane. In Kineococcus radiotolerans (strain ATCC BAA-149 / DSM 14245 / SRS30216), this protein is UPF0060 membrane protein Krad_3114.